The following is a 330-amino-acid chain: Glycoprotein integral membrane protein 1 (330 aa).

The N-terminal stretch at 1 to 23 is a signal peptide; that stretch reads MEGAPLGPLALRLLLFVALPASG. The Extracellular segment spans residues 24-268; the sequence is WLTTGAPEPP…VFPVFFQFLN (245 aa). 4 N-linked (GlcNAc...) asparagine glycosylation sites follow: Asn-46, Asn-64, Asn-166, and Asn-191. Residues 269–289 traverse the membrane as a helical segment; the sequence is IMVVGITGAAVVITILKVLFP. The Cytoplasmic segment spans residues 290 to 330; that stretch reads VSEYKGILQLDKVDVIPVTAINLYPDGPEKTAENLEDKTCI.

It localises to the membrane. This Pongo abelii (Sumatran orangutan) protein is Glycoprotein integral membrane protein 1 (GINM1).